The chain runs to 173 residues: MTEYFEVGKILSPHGLKGEVKVNATTDFPEERLATGSRLFIKNNKQYEELIVENTRRHKQFYLVKFEKIDDIDQAEKICSKELYVAETDQQELPEGSYYFKDILNCPVYDAETGEKLGVLENIETPGANDIWEIKPEKGKSFWIPNIESVVKKVDLANKRIEVTLLEGLRDEN.

The region spanning 95–169 (EGSYYFKDIL…RIEVTLLEGL (75 aa)) is the PRC barrel domain.

This sequence belongs to the RimM family. In terms of assembly, binds ribosomal protein uS19.

It localises to the cytoplasm. In terms of biological role, an accessory protein needed during the final step in the assembly of 30S ribosomal subunit, possibly for assembly of the head region. Essential for efficient processing of 16S rRNA. May be needed both before and after RbfA during the maturation of 16S rRNA. It has affinity for free ribosomal 30S subunits but not for 70S ribosomes. In Lactobacillus johnsonii (strain CNCM I-12250 / La1 / NCC 533), this protein is Ribosome maturation factor RimM.